Here is a 934-residue protein sequence, read N- to C-terminus: Serine/threonine-protein kinase PknD (934 aa).

Positions 4 to 296 (YELIRLIGRG…ELRKALQPHL (293 aa)) constitute a Protein kinase domain. ATP contacts are provided by residues 10 to 18 (IGRGGMGEV) and Lys33. Asp138 functions as the Proton acceptor in the catalytic mechanism.

The protein belongs to the protein kinase superfamily. Ser/Thr protein kinase family. Autophosphorylated on serine and threonine residues.

The catalysed reaction is L-seryl-[protein] + ATP = O-phospho-L-seryl-[protein] + ADP + H(+). It catalyses the reaction L-threonyl-[protein] + ATP = O-phospho-L-threonyl-[protein] + ADP + H(+). Functionally, together with the serine/threonine kinase Pkn1, may play a role in the specific interactions with host proteins during intracellular growth. The chain is Serine/threonine-protein kinase PknD from Chlamydia muridarum (strain MoPn / Nigg).